Here is a 432-residue protein sequence, read N- to C-terminus: Serine hydroxymethyltransferase (432 aa).

(6S)-5,6,7,8-tetrahydrofolate contacts are provided by residues Leu-127 and 131–133 (GHL). The residue at position 236 (Lys-236) is an N6-(pyridoxal phosphate)lysine.

The protein belongs to the SHMT family. In terms of assembly, homodimer. Pyridoxal 5'-phosphate serves as cofactor.

Its subcellular location is the cytoplasm. It catalyses the reaction (6R)-5,10-methylene-5,6,7,8-tetrahydrofolate + glycine + H2O = (6S)-5,6,7,8-tetrahydrofolate + L-serine. The protein operates within one-carbon metabolism; tetrahydrofolate interconversion. It participates in amino-acid biosynthesis; glycine biosynthesis; glycine from L-serine: step 1/1. In terms of biological role, catalyzes the reversible interconversion of serine and glycine with tetrahydrofolate (THF) serving as the one-carbon carrier. This reaction serves as the major source of one-carbon groups required for the biosynthesis of purines, thymidylate, methionine, and other important biomolecules. Also exhibits THF-independent aldolase activity toward beta-hydroxyamino acids, producing glycine and aldehydes, via a retro-aldol mechanism. The sequence is that of Serine hydroxymethyltransferase from Rhizobium johnstonii (strain DSM 114642 / LMG 32736 / 3841) (Rhizobium leguminosarum bv. viciae).